The sequence spans 158 residues: UPF0758 protein YkfG (158 aa).

Residues 36–158 (AFTSTHAVRE…IYSFAEHGLL (123 aa)) form the MPN domain. Zn(2+)-binding residues include histidine 107, histidine 109, and aspartate 120. The JAMM motif signature appears at 107–120 (HNHPSGETTPSQAD).

It belongs to the UPF0758 family.

In Escherichia coli (strain K12), this protein is UPF0758 protein YkfG (ykfG).